A 211-amino-acid chain; its full sequence is Methylthioribulose-1-phosphate dehydratase (211 aa).

Residues His97 and His99 each coordinate Zn(2+).

Belongs to the aldolase class II family. MtnB subfamily. Homotetramer. Zn(2+) is required as a cofactor.

The catalysed reaction is 5-(methylsulfanyl)-D-ribulose 1-phosphate = 5-methylsulfanyl-2,3-dioxopentyl phosphate + H2O. It participates in amino-acid biosynthesis; L-methionine biosynthesis via salvage pathway; L-methionine from S-methyl-5-thio-alpha-D-ribose 1-phosphate: step 2/6. Its function is as follows. Catalyzes the dehydration of methylthioribulose-1-phosphate (MTRu-1-P) into 2,3-diketo-5-methylthiopentyl-1-phosphate (DK-MTP-1-P). This Geobacillus thermodenitrificans (strain NG80-2) protein is Methylthioribulose-1-phosphate dehydratase.